We begin with the raw amino-acid sequence, 36 residues long: Pancreatic polypeptide (36 aa).

Tyrosine 36 is subject to Tyrosine amide.

It belongs to the NPY family.

The protein localises to the secreted. Hormone secreted by pancreatic cells that acts as a regulator of pancreatic and gastrointestinal functions probably by signaling through the G protein-coupled receptor NPY4R2. In Equus przewalskii (Przewalski's horse), this protein is Pancreatic polypeptide (PPY).